We begin with the raw amino-acid sequence, 333 residues long: tRNA-modifying protein YgfZ (333 aa).

Residues tryptophan 33 and tryptophan 195 each coordinate folate.

It belongs to the tRNA-modifying YgfZ family.

The protein localises to the cytoplasm. Functionally, folate-binding protein involved in regulating the level of ATP-DnaA and in the modification of some tRNAs. It is probably a key factor in regulatory networks that act via tRNA modification, such as initiation of chromosomal replication. The protein is tRNA-modifying protein YgfZ of Pectobacterium carotovorum subsp. carotovorum (strain PC1).